The following is a 139-amino-acid chain: MGMISEFKAFAVKGNVVDMAVGIIIGAAFGKIVSSFVGDIIMPPLGILIGGVDFSDLAITLKAAEGDIPAVVLAYGKFIQTVIDFVIVAFAIFMGVKAINRLKREEAVAPSAPPTPTPQETLLTEIRDLLKSQNQNRLP.

Transmembrane regions (helical) follow at residues 9–29 and 79–99; these read AFAV…GAAF and IQTV…VKAI.

Belongs to the MscL family. Homopentamer.

Its subcellular location is the cell inner membrane. Channel that opens in response to stretch forces in the membrane lipid bilayer. May participate in the regulation of osmotic pressure changes within the cell. This chain is Large-conductance mechanosensitive channel, found in Pseudomonas putida (strain W619).